Consider the following 524-residue polypeptide: GMP synthase [glutamine-hydrolyzing] (524 aa).

In terms of domain architecture, Glutamine amidotransferase type-1 spans 9-207; sequence RILILDFGSQ…VIHICQCIPN (199 aa). Cysteine 86 acts as the Nucleophile in catalysis. Active-site residues include histidine 181 and glutamate 183. The region spanning 208–399 is the GMPS ATP-PPase domain; that stretch reads WTTKHIIEDS…LGLPADLIYR (192 aa). 235-241 contacts ATP; sequence SGGVDSA.

Homodimer.

It carries out the reaction XMP + L-glutamine + ATP + H2O = GMP + L-glutamate + AMP + diphosphate + 2 H(+). It functions in the pathway purine metabolism; GMP biosynthesis; GMP from XMP (L-Gln route): step 1/1. In terms of biological role, catalyzes the synthesis of GMP from XMP. The protein is GMP synthase [glutamine-hydrolyzing] of Coxiella burnetii (strain CbuK_Q154) (Coxiella burnetii (strain Q154)).